The sequence spans 1305 residues: Contactin-associated protein like 5-4 (1305 aa).

Positions 1–24 are cleaved as a signal peptide; that stretch reads MNSVRRLNSILTLVLSGLWHLGLT. Residues 25 to 1237 lie on the Extracellular side of the membrane; it reads ATNYNCDEPL…LTDTVQSDSA (1213 aa). The F5/8 type C domain occupies 30–174; it reads CDEPLASFLS…IGMRVEVYGC (145 aa). Residues Cys30 and Cys174 are joined by a disulfide bond. 2 Laminin G-like domains span residues 180-360 and 367-544; these read IVGF…TFSC and PITF…IDLC. N-linked (GlcNAc...) asparagine glycosylation occurs at Asn282. A disulfide bridge links Cys329 with Cys360. N-linked (GlcNAc...) asparagine glycosylation is present at Asn496. Cystine bridges form between Cys512–Cys544, Cys550–Cys561, and Cys555–Cys570. The EGF-like 1 domain occupies 546-583; that stretch reads IKDRCLPNYCEHGGHCAQNWTTFYCNCSDTGYTGATCH. A glycan (N-linked (GlcNAc...) asparagine) is linked at Asn571. Residues Cys572 and Cys582 are joined by a disulfide bond. In terms of domain architecture, Fibrinogen C-terminal spans 584-790; it reads DSVYEQSCEV…LRCYGDRHFW (207 aa). N-linked (GlcNAc...) asparagine glycosylation occurs at Asn622. In terms of domain architecture, Laminin G-like 3 spans 791–956; sequence NAVSFTTEAS…KLMSGVTPGC (166 aa). Intrachain disulfides connect Cys929–Cys956, Cys960–Cys973, Cys967–Cys982, and Cys984–Cys994. The region spanning 957–995 is the EGF-like 2 domain; the sequence is LGHCSSYGSNCLNGGKCVEKQSGYSCDCTNSPNEGPFCQ. One can recognise a Laminin G-like 4 domain in the interval 1014–1198; sequence EPYLVIKNTS…VQGTLTESGC (185 aa). An N-linked (GlcNAc...) asparagine glycan is attached at Asn1057. The cysteines at positions 1163 and 1198 are disulfide-linked. A helical membrane pass occupies residues 1238 to 1258; it reads VIGGIIALVTFVTFCVIGIMI. Over 1259 to 1305 the chain is Cytoplasmic; the sequence is HFLYLHKQSHCTNQTKEKEYSENLSNSFRNAIDLQNTASECKREYFI.

Belongs to the neurexin family.

The protein localises to the membrane. Functionally, may play a role in the correct development and proper functioning of the peripheral and central nervous system and be involved in cell adhesion and intercellular communication. The sequence is that of Contactin-associated protein like 5-4 (Cntnap5d) from Rattus norvegicus (Rat).